A 493-amino-acid chain; its full sequence is Lysine--tRNA ligase (493 aa).

Residues glutamate 402 and glutamate 409 each coordinate Mg(2+).

It belongs to the class-II aminoacyl-tRNA synthetase family. Homodimer. Mg(2+) is required as a cofactor.

Its subcellular location is the cytoplasm. It catalyses the reaction tRNA(Lys) + L-lysine + ATP = L-lysyl-tRNA(Lys) + AMP + diphosphate. This is Lysine--tRNA ligase from Ureaplasma parvum serovar 3 (strain ATCC 27815 / 27 / NCTC 11736).